The following is a 475-amino-acid chain: 1-aminocyclopropane-1-carboxylate synthase CMA101 (475 aa).

Position 272 is an N6-(pyridoxal phosphate)lysine (K272).

The protein belongs to the class-I pyridoxal-phosphate-dependent aminotransferase family. As to quaternary structure, homodimer. The cofactor is pyridoxal 5'-phosphate.

It carries out the reaction S-adenosyl-L-methionine = 1-aminocyclopropane-1-carboxylate + S-methyl-5'-thioadenosine + H(+). Its pathway is alkene biosynthesis; ethylene biosynthesis via S-adenosyl-L-methionine; ethylene from S-adenosyl-L-methionine: step 1/2. Functionally, catalyzes the formation of 1-aminocyclopropane-1-carboxylate, a direct precursor of ethylene in higher plants. This is 1-aminocyclopropane-1-carboxylate synthase CMA101 (ACS2) from Cucurbita maxima (Pumpkin).